A 723-amino-acid polypeptide reads, in one-letter code: Catalase-peroxidase (723 aa).

The tryptophyl-tyrosyl-methioninium (Trp-Tyr) (with M-251) cross-link spans Trp-97 to Tyr-225. His-98 acts as the Proton acceptor in catalysis. Positions Tyr-225 to Met-251 form a cross-link, tryptophyl-tyrosyl-methioninium (Tyr-Met) (with W-97). His-266 serves as a coordination point for heme b.

The protein belongs to the peroxidase family. Peroxidase/catalase subfamily. As to quaternary structure, homodimer or homotetramer. The cofactor is heme b. In terms of processing, formation of the three residue Trp-Tyr-Met cross-link is important for the catalase, but not the peroxidase activity of the enzyme.

The catalysed reaction is H2O2 + AH2 = A + 2 H2O. It carries out the reaction 2 H2O2 = O2 + 2 H2O. Its function is as follows. Bifunctional enzyme with both catalase and broad-spectrum peroxidase activity. This Agrobacterium fabrum (strain C58 / ATCC 33970) (Agrobacterium tumefaciens (strain C58)) protein is Catalase-peroxidase.